We begin with the raw amino-acid sequence, 220 residues long: UPF0441 protein Spro_4274 (220 aa).

The segment at 181-220 (MAPKPAVTNTVTRGGFGESVAKQTSMQRSSATSSSRSMGG) is disordered. Over residues 203–220 (QTSMQRSSATSSSRSMGG) the composition is skewed to low complexity.

The protein belongs to the UPF0441 family.

In Serratia proteamaculans (strain 568), this protein is UPF0441 protein Spro_4274.